Consider the following 109-residue polypeptide: MAGALVRKAADYVRSKDFRDYLMSTHFWGPVANWGLPIAAINDMKKSPEIISGRMTFALCCYSLTFMRFAYKVQPRNWLLFACHATNEVAQLIQGGRLIRHEMSKKASA.

An N-acetylalanine modification is found at Ala-2. Topologically, residues 2–20 (AGALVRKAADYVRSKDFRD) are mitochondrial matrix. A helical transmembrane segment spans residues 21–41 (YLMSTHFWGPVANWGLPIAAI). At 42–52 (NDMKKSPEIIS) the chain is on the mother cell cytoplasmic side. A helical membrane pass occupies residues 53–71 (GRMTFALCCYSLTFMRFAY). The residue at position 72 (Lys-72) is an N6-acetyllysine. Topologically, residues 72–109 (KVQPRNWLLFACHATNEVAQLIQGGRLIRHEMSKKASA) are mitochondrial matrix.

In terms of assembly, homodimer. Forms heterodimer with MPC2. The heterodimer is the more stable and dominant form.

It localises to the mitochondrion inner membrane. The enzyme catalyses pyruvate(out) + H(+)(out) = pyruvate(in) + H(+)(in). In terms of biological role, mediates the uptake of pyruvate into mitochondria. The chain is Mitochondrial pyruvate carrier 1 (MPC1) from Bos taurus (Bovine).